The sequence spans 344 residues: Selenide, water dikinase (344 aa).

The active site involves Cys16. Residues Lys19 and 47-49 (SRD) contribute to the ATP site. Asp50 contacts Mg(2+). ATP contacts are provided by residues Asp67, Asp90, and 138 to 140 (GHS). Asp90 serves as a coordination point for Mg(2+). Position 226 (Asp226) interacts with Mg(2+).

Belongs to the selenophosphate synthase 1 family. Class I subfamily. Homodimer. Mg(2+) is required as a cofactor.

It carries out the reaction hydrogenselenide + ATP + H2O = selenophosphate + AMP + phosphate + 2 H(+). In terms of biological role, synthesizes selenophosphate from selenide and ATP. The protein is Selenide, water dikinase of Bordetella bronchiseptica (strain ATCC BAA-588 / NCTC 13252 / RB50) (Alcaligenes bronchisepticus).